Here is a 31-residue protein sequence, read N- to C-terminus: Malate dehydrogenase, mitochondrial (31 aa).

NAD(+) contacts are provided by residues 9 to 19 (GIGQPLSLLMK) and 20 to 31 (DDLFNINAGIVK).

This sequence belongs to the LDH/MDH superfamily. MDH type 1 family. In terms of assembly, homodimer.

The protein resides in the mitochondrion matrix. It carries out the reaction (S)-malate + NAD(+) = oxaloacetate + NADH + H(+). This is Malate dehydrogenase, mitochondrial from Imperata cylindrica (Cogon grass).